A 41-amino-acid polypeptide reads, in one-letter code: Large ribosomal subunit protein bL36B (41 aa).

This sequence belongs to the bacterial ribosomal protein bL36 family.

This is Large ribosomal subunit protein bL36B from Neisseria meningitidis serogroup B (strain ATCC BAA-335 / MC58).